Reading from the N-terminus, the 842-residue chain is Xyloglucanase Xgh74A (842 aa).

Residues 1–32 (MVKKFTSKIKAAVFAAVVAATAIFGPAISSQA) form the signal peptide. Asp70 functions as the Nucleophile in the catalytic mechanism. 4 BNR repeats span residues 134-144 (RSTDRGETWEK), 185-196 (WRSTDYGVTWSK), 252-262 (YRSTDGGVTWK), and 358-368 (FRSTDGGATWK). The active-site Proton donor is Asp480. BNR repeat units lie at residues 533-541 (FSYDGGRNW), 577-586 (VTTDNGNSWK), 616-626 (YISTDGGLTFT), 660-671 (WRSTDGGYTFEK), and 708-718 (FRSDDAGKTWV). The Dockerin domain occupies 771–841 (DKGLVGDLNG…LLQAIPELPK (71 aa)).

Belongs to the glycosyl hydrolase 74 family.

Functionally, hydrolyzes the glucosidic bonds of unbranched Glc residues in tamarind seed xyloglucan, producing XXXG, XLXG, XXLG and XLLG. Has low activity on carboxymethylcellulose, lichenan,hydroxyethylcellulose and glucuronoxylan, and no activity on xylan, polygalaturonic acid, wheat arabinoxylan, rhamnogalacturan, curdlan, laminarin, galactomannan, galactan, arabinan and pachyman or amorphous cellulose. The chain is Xyloglucanase Xgh74A from Acetivibrio thermocellus (Hungateiclostridium thermocellum).